Reading from the N-terminus, the 340-residue chain is Glyceraldehyde-3-phosphate dehydrogenase (340 aa).

Residues 11-12 (SI) and Gly111 contribute to the NAD(+) site. D-glyceraldehyde 3-phosphate is bound at residue 140 to 142 (SCN). Cys141 serves as the catalytic Nucleophile. Position 169 (Arg169) interacts with NAD(+). 195–196 (HG) lines the D-glyceraldehyde 3-phosphate pocket. NAD(+) is bound at residue Gln303.

This sequence belongs to the glyceraldehyde-3-phosphate dehydrogenase family. As to quaternary structure, homotetramer.

Its subcellular location is the cytoplasm. The enzyme catalyses D-glyceraldehyde 3-phosphate + phosphate + NADP(+) = (2R)-3-phospho-glyceroyl phosphate + NADPH + H(+). It carries out the reaction D-glyceraldehyde 3-phosphate + phosphate + NAD(+) = (2R)-3-phospho-glyceroyl phosphate + NADH + H(+). It participates in carbohydrate degradation; glycolysis; pyruvate from D-glyceraldehyde 3-phosphate: step 1/5. This Methanococcus maripaludis (strain C6 / ATCC BAA-1332) protein is Glyceraldehyde-3-phosphate dehydrogenase.